The chain runs to 37 residues: Large ribosomal subunit protein bL36 (37 aa).

This sequence belongs to the bacterial ribosomal protein bL36 family.

This chain is Large ribosomal subunit protein bL36, found in Leptospira biflexa serovar Patoc (strain Patoc 1 / Ames).